Consider the following 253-residue polypeptide: Putative enoyl-CoA hydratase (253 aa).

E131 is an active-site residue.

This sequence belongs to the enoyl-CoA hydratase/isomerase family. In terms of assembly, homohexamer; dimer of trimers.

The enzyme catalyses a (3S)-3-hydroxyacyl-CoA = a (2E)-enoyl-CoA + H2O. The polypeptide is Putative enoyl-CoA hydratase (Thermus thermophilus (strain ATCC 27634 / DSM 579 / HB8)).